Reading from the N-terminus, the 979-residue chain is Probable serine/threonine-protein kinase iksA (979 aa).

N-linked (GlcNAc...) asparagine glycosylation is found at Asn32, Asn110, Asn120, Asn121, Asn147, Asn155, Asn161, Asn220, Asn231, and Asn243. The disordered stretch occupies residues 207–245; the sequence is SKSGVNNNNNNNNNDSTTTNNNNNNNTTPPQQQQQQNSS. The segment covering 212-244 has biased composition (low complexity); sequence NNNNNNNNNDSTTTNNNNNNNTTPPQQQQQQNS. One can recognise a Protein kinase domain in the interval 261–568; the sequence is FKEDIKIGSG…ISQILSTHFI (308 aa). ATP-binding positions include 267-275 and Lys293; that span reads IGSGGFGSV. Asp397 (proton acceptor) is an active-site residue. Asn592, Asn597, Asn615, Asn645, Asn646, Asn663, and Asn699 each carry an N-linked (GlcNAc...) asparagine glycan. A compositionally biased stretch (polar residues) spans 593–602; it reads TSVHNTTAST. Residues 593–666 form a disordered region; the sequence is TSVHNTTAST…LGNNNNNNTN (74 aa). Positions 610–666 are enriched in low complexity; that stretch reads SISTTNSTTSSSSSTATSSSLSSTTIATTSSSNAINNTTATTTTNSNLGNNNNNNTN. A compositionally biased stretch (acidic residues) spans 713–727; it reads NDDIIIDDDDDDDDS. The disordered stretch occupies residues 713–793; it reads NDDIIIDDDD…GNNGIRKALP (81 aa). 2 stretches are compositionally biased toward low complexity: residues 728 to 737 and 753 to 773; these read TNNNDTNNTD and NNKK…SSNK. Residues Asn731 and Asn734 are each glycosylated (N-linked (GlcNAc...) asparagine). Residues 846–866 form a helical membrane-spanning segment; sequence FPSPILLYPLLLLSLIPILVV. Asn870 and Asn894 each carry an N-linked (GlcNAc...) asparagine glycan. 2 helical membrane-spanning segments follow: residues 912–932 and 956–976; these read INTI…VLLP and FPLL…IFIF.

This sequence belongs to the protein kinase superfamily. Ser/Thr protein kinase family.

The protein localises to the membrane. It catalyses the reaction L-seryl-[protein] + ATP = O-phospho-L-seryl-[protein] + ADP + H(+). It carries out the reaction L-threonyl-[protein] + ATP = O-phospho-L-threonyl-[protein] + ADP + H(+). The chain is Probable serine/threonine-protein kinase iksA (iksA) from Dictyostelium discoideum (Social amoeba).